Here is a 403-residue protein sequence, read N- to C-terminus: Tyrosine--tRNA ligase (403 aa).

Residues Pro-42–His-51 carry the 'HIGH' region motif. The short motif at Lys-226 to Ser-230 is the 'KMSKS' region element. Position 229 (Lys-229) interacts with ATP. One can recognise an S4 RNA-binding domain in the interval Leu-339–Leu-400.

This sequence belongs to the class-I aminoacyl-tRNA synthetase family. TyrS type 2 subfamily. As to quaternary structure, homodimer.

It is found in the cytoplasm. It carries out the reaction tRNA(Tyr) + L-tyrosine + ATP = L-tyrosyl-tRNA(Tyr) + AMP + diphosphate + H(+). Functionally, catalyzes the attachment of tyrosine to tRNA(Tyr) in a two-step reaction: tyrosine is first activated by ATP to form Tyr-AMP and then transferred to the acceptor end of tRNA(Tyr). This Xanthomonas axonopodis pv. citri (strain 306) protein is Tyrosine--tRNA ligase.